The following is a 566-amino-acid chain: Malate synthase, glyoxysomal (566 aa).

Arg-179 functions as the Proton acceptor in the catalytic mechanism. Asp-465 (proton donor) is an active-site residue. The Microbody targeting signal motif lies at 564 to 566 (SRL).

It belongs to the malate synthase family.

Its subcellular location is the glyoxysome. It carries out the reaction glyoxylate + acetyl-CoA + H2O = (S)-malate + CoA + H(+). It participates in carbohydrate metabolism; glyoxylate cycle; (S)-malate from isocitrate: step 2/2. This Raphanus sativus (Radish) protein is Malate synthase, glyoxysomal (MLS).